The following is a 214-amino-acid chain: Proteasome subunit beta (214 aa).

A propeptide spans 1 to 11 (MLDTSQEIMKG) (removed in mature form; by autocatalysis). Residue Thr-12 is the Nucleophile of the active site.

It belongs to the peptidase T1B family. The 20S proteasome core is composed of 14 alpha and 14 beta subunits that assemble into four stacked heptameric rings, resulting in a barrel-shaped structure. The two inner rings, each composed of seven catalytic beta subunits, are sandwiched by two outer rings, each composed of seven alpha subunits. The catalytic chamber with the active sites is on the inside of the barrel. Has a gated structure, the ends of the cylinder being occluded by the N-termini of the alpha-subunits. Is capped at one or both ends by the proteasome regulatory ATPase, PAN.

The protein resides in the cytoplasm. It carries out the reaction Cleavage of peptide bonds with very broad specificity.. With respect to regulation, the formation of the proteasomal ATPase PAN-20S proteasome complex, via the docking of the C-termini of PAN into the intersubunit pockets in the alpha-rings, triggers opening of the gate for substrate entry. Interconversion between the open-gate and close-gate conformations leads to a dynamic regulation of the 20S proteasome proteolysis activity. Its function is as follows. Component of the proteasome core, a large protease complex with broad specificity involved in protein degradation. This Methanoculleus marisnigri (strain ATCC 35101 / DSM 1498 / JR1) protein is Proteasome subunit beta.